The sequence spans 335 residues: Nucleoid-associated protein YejK (335 aa).

This sequence belongs to the YejK family.

It is found in the cytoplasm. The protein resides in the nucleoid. The sequence is that of Nucleoid-associated protein YejK from Shigella sonnei (strain Ss046).